The primary structure comprises 156 residues: SPbeta prophage-derived uncharacterized protein YosH (156 aa).

The sequence is that of SPbeta prophage-derived uncharacterized protein YosH (yosH) from Bacillus subtilis (strain 168).